Consider the following 395-residue polypeptide: G-protein coupled receptor 182 (395 aa).

Topologically, residues 1–53 are extracellular; it reads MSVIPSPRPVSTLEPDNDFRDIHNWTELLHLFNQTFTDCHIEFNENTKHVVLF. N-linked (GlcNAc...) asparagine glycosylation is found at Asn-24 and Asn-33. Residues 54–75 traverse the membrane as a helical segment; the sequence is VFYLAIFVVGLVENVLVICVNC. Residues 76 to 86 lie on the Cytoplasmic side of the membrane; that stretch reads RRSGRVGMLNL. A helical membrane pass occupies residues 87–109; it reads YILNMAIADLGIILSLPVWMLEV. Residues 110-123 lie on the Extracellular side of the membrane; the sequence is MLEYTWLWGSFSCR. A disulfide bond links Cys-122 and Cys-198. The helical transmembrane segment at 124 to 145 threads the bilayer; it reads FIHYFYLVNMYSSIFFLTCLSI. Residues 146–166 lie on the Cytoplasmic side of the membrane; it reads DRYVTLTNTSPSWQRHQHRIR. A helical membrane pass occupies residues 167 to 189; that stretch reads RAVCAGVWVLSAIIPLPEVVHIQ. Residues 190 to 213 are Extracellular-facing; sequence LLDGSEPMCLFLAPFETYSAWALA. A helical transmembrane segment spans residues 214–235; the sequence is VALSATILGFLLPFLLIAVFNI. Over 236-254 the chain is Cytoplasmic; sequence LTACRLRRQRQTESRRHCL. The chain crosses the membrane as a helical span at residues 255 to 276; it reads LMWAYIVVFAICWLPYQVTMLL. Topologically, residues 277 to 295 are extracellular; sequence LTLHGTHIFLHCHLVNLLY. The helical transmembrane segment at 296-316 threads the bilayer; the sequence is FFYEIIDCFSMLHCVANPILY. The Cytoplasmic segment spans residues 317-395; the sequence is NFLSPSFRGR…QTPHLHSAIL (79 aa). The residue at position 329 (Ser-329) is a Phosphoserine.

This sequence belongs to the G-protein coupled receptor 1 family. In terms of tissue distribution, expressed in liver and lung.

It is found in the cell membrane. Functionally, orphan receptor. The chain is G-protein coupled receptor 182 (Gpr182) from Mus musculus (Mouse).